Consider the following 174-residue polypeptide: Interleukin-10 (174 aa).

Positions 1–16 are cleaved as a signal peptide; that stretch reads MPTWMLLFCLLCVTSS. N17 carries N-linked (GlcNAc...) asparagine glycosylation. 2 disulfides stabilise this stretch: C26–C122 and C76–C128.

Belongs to the IL-10 family. In terms of assembly, homodimer. Interacts with IL10RA and IL10RB.

The protein localises to the secreted. Its function is as follows. Major immune regulatory cytokine that acts on many cells of the immune system where it has profound anti-inflammatory functions, limiting excessive tissue disruption caused by inflammation. Mechanistically, IL10 binds to its heterotetrameric receptor comprising IL10RA and IL10RB leading to JAK1 and STAT2-mediated phosphorylation of STAT3. In turn, STAT3 translocates to the nucleus where it drives expression of anti-inflammatory mediators. Targets antigen-presenting cells (APCs) such as macrophages and monocytes and inhibits their release of pro-inflammatory cytokines including granulocyte-macrophage colony-stimulating factor /GM-CSF, granulocyte colony-stimulating factor/G-CSF, IL-1 alpha, IL-1 beta, IL-6, IL-8 and TNF-alpha. Also interferes with antigen presentation by reducing the expression of MHC-class II and co-stimulatory molecules, thereby inhibiting their ability to induce T cell activation. In addition, controls the inflammatory response of macrophages by reprogramming essential metabolic pathways including mTOR signaling. The protein is Interleukin-10 (IL10) of Trichosurus vulpecula (Brush-tailed possum).